Reading from the N-terminus, the 441-residue chain is Matrix extracellular phosphoglycoprotein (441 aa).

An N-terminal signal peptide occupies residues 1 to 24 (MTPEGLMKMQAVSVGLLLFSMTWA). Residue Asn-82 is glycosylated (N-linked (GlcNAc...) asparagine). Positions 137–441 (QSSPVKSKHT…SGSSSESHGD (305 aa)) are disordered. Basic residues predominate over residues 142–156 (KSKHTKHTRQTRRST). Positions 178–200 (PDLLVRGDNDVPPFSGDGQHFMH) are dentonin. A Cell attachment site motif is present at residues 183-185 (RGD). An O-linked (Xyl...) (chondroitin sulfate) serine glycan is attached at Ser-192. Residues 211–223 (PESSTSRPLSGSS) show a composition bias toward polar residues. Residues 313 to 325 (SREKVKGGVEHAG) are compositionally biased toward basic and acidic residues. Polar residues-rich tracts occupy residues 349–358 (GNQLTLTASQ) and 391–405 (GQNN…SQRR). Positions 424-441 (RDSSESSSSGSSSESHGD) are ASARM motif; interaction with PHEX. The segment covering 428–441 (ESSSSGSSSESHGD) has biased composition (low complexity).

This sequence belongs to the PF07175/osteoregulin family. In terms of assembly, interacts (via ASARM motif) with PHEX; the interaction is zinc-dependent. Post-translationally, phosphorylated on serine residues in the ASARM motif; the phosphorylation is important for the inhibition of bone mineralization. Cleaved by CTSB/cathepsin B; the cleavage is blocked by metalloprotease PHEX. In terms of tissue distribution, expressed in osteocytes (at protein level). Expressed by chondrocytes, specifically in the hypertrophic zone of the bone growth plate (at protein level). Expressed in osteoblasts in bone (at protein level). Expressed by osteoblasts within the metaphysis (at protein level). Expressed at low levels in white fat, brown fat, testes, brain and aorta. Expressed in the craniofacial complex (at protein level). Expressed in odontoblasts, ameloblasts and in predentin during tooth development (at protein level). Expressed in the kidney (at protein level). Expressed in osteocytes in mandibular condylar cartilage and tibial cartilage (at protein level). Expressed in salivary glands.

It is found in the secreted. It localises to the extracellular space. The protein localises to the extracellular matrix. Functionally, regulates renal phosphate and uric acid excretion. Regulates bone mineralization by osteoblasts and cartilage mineralization by chondrocytes. Regulates the mineralization of the extracellular matrix of the craniofacial complex, such as teeth, bone and cartilage. Increases dental pulp stem cell proliferation. The chain is Matrix extracellular phosphoglycoprotein from Mus musculus (Mouse).